A 534-amino-acid chain; its full sequence is Phenylalanine N-monooxygenase CYP79D16 (534 aa).

A signal peptide spans 1–21 (MEANVGFLTLCLAITLVRFLM). Heme is bound at residue cysteine 472. N-linked (GlcNAc...) asparagine glycosylation is present at asparagine 500.

This sequence belongs to the cytochrome P450 family. It depends on heme as a cofactor. As to expression, expressed in seedlings.

It carries out the reaction L-phenylalanine + 2 reduced [NADPH--hemoprotein reductase] + 2 O2 = (E)-phenylacetaldehyde oxime + 2 oxidized [NADPH--hemoprotein reductase] + CO2 + 3 H2O + 2 H(+). Functionally, involved in L-phenylalanine-derived cyanogenic glycoside biosynthesis, including prunasin and amygdalin defensive agents. Catalyzes the conversion of L-phenylalanine (Phe) into phenylacetaldoxime (PAOx). Cannot use tyrosine (Tyr), tryptophan (Trp) and valine (Val) as substrates. The polypeptide is Phenylalanine N-monooxygenase CYP79D16 (Prunus mume (Japanese apricot)).